Consider the following 284-residue polypeptide: Bifunctional protein FolD (284 aa).

NADP(+) is bound at residue 166–168 (GAS).

The protein belongs to the tetrahydrofolate dehydrogenase/cyclohydrolase family. As to quaternary structure, homodimer.

The enzyme catalyses (6R)-5,10-methylene-5,6,7,8-tetrahydrofolate + NADP(+) = (6R)-5,10-methenyltetrahydrofolate + NADPH. The catalysed reaction is (6R)-5,10-methenyltetrahydrofolate + H2O = (6R)-10-formyltetrahydrofolate + H(+). Its pathway is one-carbon metabolism; tetrahydrofolate interconversion. Its function is as follows. Catalyzes the oxidation of 5,10-methylenetetrahydrofolate to 5,10-methenyltetrahydrofolate and then the hydrolysis of 5,10-methenyltetrahydrofolate to 10-formyltetrahydrofolate. This Legionella pneumophila subsp. pneumophila (strain Philadelphia 1 / ATCC 33152 / DSM 7513) protein is Bifunctional protein FolD.